Consider the following 122-residue polypeptide: Large ribosomal subunit protein bL12 (122 aa).

The protein belongs to the bacterial ribosomal protein bL12 family. In terms of assembly, homodimer. Part of the ribosomal stalk of the 50S ribosomal subunit. Forms a multimeric L10(L12)X complex, where L10 forms an elongated spine to which 2 to 4 L12 dimers bind in a sequential fashion. Binds GTP-bound translation factors.

Its function is as follows. Forms part of the ribosomal stalk which helps the ribosome interact with GTP-bound translation factors. Is thus essential for accurate translation. The sequence is that of Large ribosomal subunit protein bL12 from Lacticaseibacillus casei (strain BL23) (Lactobacillus casei).